A 139-amino-acid chain; its full sequence is Putative pre-16S rRNA nuclease (139 aa).

The protein belongs to the YqgF nuclease family.

The protein localises to the cytoplasm. Functionally, could be a nuclease involved in processing of the 5'-end of pre-16S rRNA. The polypeptide is Putative pre-16S rRNA nuclease (Haemophilus influenzae (strain PittEE)).